The following is a 497-amino-acid chain: Glycerol kinase (497 aa).

Threonine 12 is a binding site for ADP. Residues threonine 12, threonine 13, and serine 14 each contribute to the ATP site. Position 12 (threonine 12) interacts with sn-glycerol 3-phosphate. An ADP-binding site is contributed by arginine 16. Residues arginine 82, glutamate 83, tyrosine 134, and aspartate 243 each contribute to the sn-glycerol 3-phosphate site. Residues arginine 82, glutamate 83, tyrosine 134, aspartate 243, and glutamine 244 each coordinate glycerol. ADP is bound by residues threonine 265 and glycine 308. ATP contacts are provided by threonine 265, glycine 308, glutamine 312, and glycine 411. An ADP-binding site is contributed by glycine 411.

The protein belongs to the FGGY kinase family.

It carries out the reaction glycerol + ATP = sn-glycerol 3-phosphate + ADP + H(+). It participates in polyol metabolism; glycerol degradation via glycerol kinase pathway; sn-glycerol 3-phosphate from glycerol: step 1/1. Inhibited by fructose 1,6-bisphosphate (FBP). Its function is as follows. Key enzyme in the regulation of glycerol uptake and metabolism. Catalyzes the phosphorylation of glycerol to yield sn-glycerol 3-phosphate. This Xanthobacter autotrophicus (strain ATCC BAA-1158 / Py2) protein is Glycerol kinase.